The following is a 1612-amino-acid chain: Roundabout homolog 1 (1612 aa).

The N-terminal stretch at 1-19 (MIAEPAHFYLFGLICLCSG) is a signal peptide. Over 20–858 (SRLRQEDFPP…QQISDVVRQP (839 aa)) the chain is Extracellular. 5 Ig-like C2-type domains span residues 29-125 (PRIV…ASLE), 131-218 (DDFR…AELT), 223-307 (PSFV…ATLT), 312-407 (PHFV…LEVT), and 416-502 (PVIR…AYIE). A disulfide bridge connects residues C50 and C108. N-linked (GlcNAc...) asparagine glycosylation occurs at N121. 3 disulfides stabilise this stretch: C152-C201, C244-C291, and C333-C389. N424 carries N-linked (GlcNAc...) asparagine glycosylation. An intrachain disulfide couples C437 to C486. Fibronectin type-III domains follow at residues 524 to 618 (APSK…TQDV), 637 to 734 (VVLH…TLEE), and 739 to 835 (PPRS…LDSH). N-linked (GlcNAc...) asparagine glycans are attached at residues N751, N781, and N788. Residues 859–879 (AFIAGIGAACWIILMVFSIWL) form a helical membrane-spanning segment. At 880-1612 (YRHRKKRNGL…NNEELEETES (733 aa)) the chain is on the cytoplasmic side. Residue S901 is modified to Phosphoserine. The residue at position 909 (T909) is a Phosphothreonine. Residue Y999 is modified to Phosphotyrosine. S1016 is subject to Phosphoserine. A Phosphotyrosine modification is found at Y1034. Residues 1045 to 1068 (SNNMNNGAGDSSEKHWKPPGQQKP) form a disordered region. Y1075 is modified (phosphotyrosine). 3 disordered regions span residues 1088–1298 (RAND…ADME), 1313–1358 (EQTP…DGSF), and 1381–1612 (RRQM…ETES). Residues 1098 to 1107 (PYNQSYDQNT) show a composition bias toward polar residues. Residues 1108 to 1124 (GGSYNSSDRGSSTSGSQ) show a composition bias toward low complexity. Residues 1147 to 1157 (LPPPPAHPPPH) show a composition bias toward pro residues. T1201 is modified (phosphothreonine). Residues 1216–1230 (YSHQSTATLTPSPQE) are compositionally biased toward polar residues. The span at 1242–1254 (DLGHMPHPPDRRR) shows a compositional bias: basic and acidic residues. Residues 1257–1268 (VSPPPPPRPISP) show a composition bias toward pro residues. Residue S1258 is modified to Phosphoserine. Residues 1283 to 1297 (MDTDAPEEEEDEADM) show a composition bias toward acidic residues. The span at 1345-1358 (SSGRSSVSSSDGSF) shows a compositional bias: low complexity. Residues 1399–1412 (PRPTSPVSTDSNMS) show a composition bias toward polar residues. Basic residues predominate over residues 1420 to 1431 (RPAKKQKHQPGH). Over residues 1441–1451 (LPPPPVPPPAI) the composition is skewed to pro residues. Basic and acidic residues-rich tracts occupy residues 1477-1502 (ARTD…RQVT) and 1510-1534 (DPRE…RDLP). Residues 1553 to 1562 (FPTSNNPRDP) are compositionally biased toward polar residues. A compositionally biased stretch (low complexity) spans 1563 to 1575 (SSSSSMSSRGSGS). Residues 1603–1612 (NNEELEETES) show a composition bias toward acidic residues.

The protein belongs to the immunoglobulin superfamily. ROBO family. As to quaternary structure, homodimer. Dimerization is mediated by the extracellular domain and is independent of SLIT liganding. Interacts with SLIT1 Interacts with SLIT2. Interacts with FLRT3. Interacts with MYO9B (via Rho-GAP domain). In terms of processing, ubiquitinated. May be deubiquitinated by USP33. As to expression, detected in embryonic thalamus neurons (at protein level). Expressed in embryonal spinal cord. Expressed in embryonal lung, and in adult lung bronchial epithelial cells of large proximal airways.

The protein localises to the cell membrane. Its subcellular location is the cell projection. It localises to the axon. It is found in the endoplasmic reticulum-Golgi intermediate compartment membrane. Receptor for SLIT1 and SLIT2 that mediates cellular responses to molecular guidance cues in cellular migration, including axonal navigation at the ventral midline of the neural tube and projection of axons to different regions during neuronal development. Interaction with the intracellular domain of FLRT3 mediates axon attraction towards cells expressing NTN1. In axon growth cones, the silencing of the attractive effect of NTN1 by SLIT2 may require the formation of a ROBO1-DCC complex. Plays a role in the regulation of cell migration via its interaction with MYO9B; inhibits MYO9B-mediated stimulation of RHOA GTPase activity, and thereby leads to increased levels of active, GTP-bound RHOA. May be required for lung development. The protein is Roundabout homolog 1 (Robo1) of Mus musculus (Mouse).